Reading from the N-terminus, the 69-residue chain is Putative membrane protein insertion efficiency factor (69 aa).

The protein belongs to the UPF0161 family.

It is found in the cell membrane. Its function is as follows. Could be involved in insertion of integral membrane proteins into the membrane. The protein is Putative membrane protein insertion efficiency factor of Clostridium beijerinckii (strain ATCC 51743 / NCIMB 8052) (Clostridium acetobutylicum).